The primary structure comprises 877 residues: Putative leucine-rich repeat receptor-like serine/threonine-protein kinase At2g19230 (877 aa).

Residues 1–24 (MGNFNFLPLVSFASFVVVLVLVCA) form the signal peptide. At 25–517 (QDQSGFVSID…RNKKTERKEY (493 aa)) the chain is on the extracellular side. 6 N-linked (GlcNAc...) asparagine glycosylation sites follow: Asn142, Asn233, Asn261, Asn295, Asn405, and Asn420. LRR repeat units follow at residues 439-462 (PLQK…ANLP) and 463-484 (DLTE…KLLE). A helical transmembrane segment spans residues 518 to 538 (IIPSVASVTGLFFLLLALISF). Residues 539-877 (WQFKKRQQSV…VDPGVLPQPR (339 aa)) are Cytoplasmic-facing. In terms of domain architecture, Protein kinase spans 569 to 842 (NNFERVLGQG…QVVAELKESL (274 aa)). ATP-binding positions include 575 to 583 (LGQGGFGKV) and Lys596. Position 641 is a phosphotyrosine (Tyr641). The active-site Proton acceptor is Asp692. Residue Ser726 is modified to Phosphoserine. 2 positions are modified to phosphothreonine: Thr727 and Thr732.

This sequence belongs to the protein kinase superfamily. Ser/Thr protein kinase family.

The protein resides in the cell membrane. The enzyme catalyses L-seryl-[protein] + ATP = O-phospho-L-seryl-[protein] + ADP + H(+). It carries out the reaction L-threonyl-[protein] + ATP = O-phospho-L-threonyl-[protein] + ADP + H(+). The sequence is that of Putative leucine-rich repeat receptor-like serine/threonine-protein kinase At2g19230 from Arabidopsis thaliana (Mouse-ear cress).